Consider the following 206-residue polypeptide: Elongation factor Ts (206 aa).

An involved in Mg(2+) ion dislocation from EF-Tu region spans residues 81-84; that stretch reads TDFV.

This sequence belongs to the EF-Ts family.

It is found in the cytoplasm. In terms of biological role, associates with the EF-Tu.GDP complex and induces the exchange of GDP to GTP. It remains bound to the aminoacyl-tRNA.EF-Tu.GTP complex up to the GTP hydrolysis stage on the ribosome. In Maridesulfovibrio salexigens (strain ATCC 14822 / DSM 2638 / NCIMB 8403 / VKM B-1763) (Desulfovibrio salexigens), this protein is Elongation factor Ts.